Consider the following 1129-residue polypeptide: Phytochrome A type 3 (1129 aa).

Over residues 1–21 (MSSSRPASSSSSRNRQSSQAR) the composition is skewed to low complexity. A disordered region spans residues 1 to 24 (MSSSRPASSSSSRNRQSSQARVLA). A GAF domain is found at 217–402 (SMEVLCNTVV…VFAVHVNREF (186 aa)). A phytochromobilin-binding site is contributed by C322. PAS domains lie at 618–688 (VTSE…LQGK) and 748–822 (VEGD…VSLC). Positions 902-1122 (YMRHAINNPL…TFIITAELAS (221 aa)) constitute a Histidine kinase domain.

The protein belongs to the phytochrome family. Homodimer. Contains one covalently linked phytochromobilin chromophore.

Its function is as follows. Regulatory photoreceptor which exists in two forms that are reversibly interconvertible by light: the Pr form that absorbs maximally in the red region of the spectrum and the Pfr form that absorbs maximally in the far-red region. Photoconversion of Pr to Pfr induces an array of morphogenic responses, whereas reconversion of Pfr to Pr cancels the induction of those responses. Pfr controls the expression of a number of nuclear genes including those encoding the small subunit of ribulose-bisphosphate carboxylase, chlorophyll A/B binding protein, protochlorophyllide reductase, rRNA, etc. It also controls the expression of its own gene(s) in a negative feedback fashion. The polypeptide is Phytochrome A type 3 (PHYA3) (Avena sativa (Oat)).